We begin with the raw amino-acid sequence, 428 residues long: Adenylosuccinate synthetase (428 aa).

GTP is bound by residues glycine 12 to lysine 18 and glycine 40 to threonine 42. Aspartate 13 (proton acceptor) is an active-site residue. Residues aspartate 13 and glycine 40 each contribute to the Mg(2+) site. IMP-binding positions include aspartate 13–lysine 16, asparagine 38–histidine 41, threonine 128, arginine 142, glutamine 223, threonine 238, and arginine 302. Histidine 41 functions as the Proton donor in the catalytic mechanism. Threonine 298–arginine 304 is a substrate binding site. GTP contacts are provided by residues arginine 304, serine 330–aspartate 332, and serine 412–glycine 414.

It belongs to the adenylosuccinate synthetase family. Homodimer. Requires Mg(2+) as cofactor.

The protein resides in the cytoplasm. It carries out the reaction IMP + L-aspartate + GTP = N(6)-(1,2-dicarboxyethyl)-AMP + GDP + phosphate + 2 H(+). The protein operates within purine metabolism; AMP biosynthesis via de novo pathway; AMP from IMP: step 1/2. In terms of biological role, plays an important role in the de novo pathway of purine nucleotide biosynthesis. Catalyzes the first committed step in the biosynthesis of AMP from IMP. In Streptococcus pneumoniae serotype 2 (strain D39 / NCTC 7466), this protein is Adenylosuccinate synthetase.